A 103-amino-acid polypeptide reads, in one-letter code: Small ribosomal subunit protein bS6c (103 aa).

It belongs to the bacterial ribosomal protein bS6 family.

It is found in the plastid. It localises to the chloroplast. Its function is as follows. Binds together with bS18 to 16S ribosomal RNA. The sequence is that of Small ribosomal subunit protein bS6c from Gracilaria tenuistipitata var. liui (Red alga).